The chain runs to 214 residues: uncharacterized protein (214 aa).

A signal peptide spans 1 to 24 (MVTPHGILLLTITAAASLLWITFA). The tract at residues 99–121 (APNDTQEQNSTRNKRDSESYTAT) is disordered. Positions 100 to 109 (PNDTQEQNST) are enriched in polar residues.

As to expression, component of the acid-insoluble and acid-soluble organic matrix of the aragonitic skeleton (at protein level).

The protein localises to the secreted. This is an uncharacterized protein from Acropora millepora (Staghorn coral).